The following is a 2699-amino-acid chain: UPF0648 protein C3H5.09c (2699 aa).

A glycan (N-linked (GlcNAc...) asparagine) is linked at Asn21. Residues 24-44 (FVWVVIATGFLFHLVLFVLSY) form a helical membrane-spanning segment. Asn288, Asn293, Asn334, Asn345, Asn433, Asn507, Asn551, Asn655, Asn760, Asn993, Asn1000, Asn1003, Asn1006, and Asn1009 each carry an N-linked (GlcNAc...) asparagine glycan. Residues 975–1021 (KAKDPSPKSASESSSFYQNGSDIDDNDSNSSNTSNHTTENANAQQRK) are disordered. Over residues 981-995 (PKSASESSSFYQNGS) the composition is skewed to low complexity. A coiled-coil region spans residues 1006 to 1033 (NTSNHTTENANAQQRKLEDLNRSFEDFL). Residues 1010–1019 (HTTENANAQQ) are compositionally biased toward polar residues. 19 N-linked (GlcNAc...) asparagine glycosylation sites follow: Asn1026, Asn1039, Asn1046, Asn1236, Asn1255, Asn1344, Asn1527, Asn1595, Asn1791, Asn1916, Asn2032, Asn2048, Asn2256, Asn2285, Asn2388, Asn2407, Asn2417, Asn2508, and Asn2622. A coiled-coil region spans residues 1758–1818 (QYELLQKRRK…TLSDHYRLLE (61 aa)). The tract at residues 2393 to 2447 (FPHIYSRNHDKRKENGSQGEADNSNYSGSLMRRRTNDQEEDALATPSSSRRDSRS) is disordered. The segment covering 2408–2420 (GSQGEADNSNYSG) has biased composition (polar residues). 2 disordered regions span residues 2606–2632 (AEENQEEGSPASAISRNHSTRSSLNSP) and 2647–2676 (ADIVKRHIPPTINGKRSKNKGNEGSNARVD). Positions 2617-2632 (SAISRNHSTRSSLNSP) are enriched in polar residues.

The protein belongs to the UPF0648 family.

It is found in the membrane. This is UPF0648 protein C3H5.09c from Schizosaccharomyces pombe (strain 972 / ATCC 24843) (Fission yeast).